The following is a 297-amino-acid chain: 4-hydroxy-tetrahydrodipicolinate synthase (297 aa).

Pyruvate is bound at residue threonine 49. Catalysis depends on tyrosine 137, which acts as the Proton donor/acceptor. Lysine 166 acts as the Schiff-base intermediate with substrate in catalysis. Isoleucine 208 is a binding site for pyruvate.

This sequence belongs to the DapA family. In terms of assembly, homotetramer; dimer of dimers.

The protein localises to the cytoplasm. The enzyme catalyses L-aspartate 4-semialdehyde + pyruvate = (2S,4S)-4-hydroxy-2,3,4,5-tetrahydrodipicolinate + H2O + H(+). It participates in amino-acid biosynthesis; L-lysine biosynthesis via DAP pathway; (S)-tetrahydrodipicolinate from L-aspartate: step 3/4. Functionally, catalyzes the condensation of (S)-aspartate-beta-semialdehyde [(S)-ASA] and pyruvate to 4-hydroxy-tetrahydrodipicolinate (HTPA). The chain is 4-hydroxy-tetrahydrodipicolinate synthase from Chlorobium phaeobacteroides (strain BS1).